A 215-amino-acid polypeptide reads, in one-letter code: Small ribosomal subunit protein uS3 (215 aa).

Positions 38-106 (LRAFLKKKLF…EVLIDIQEIR (69 aa)) constitute a KH type-2 domain.

It belongs to the universal ribosomal protein uS3 family. In terms of assembly, part of the 30S ribosomal subunit. Forms a tight complex with proteins S10 and S14.

In terms of biological role, binds the lower part of the 30S subunit head. Binds mRNA in the 70S ribosome, positioning it for translation. The sequence is that of Small ribosomal subunit protein uS3 from Desulforapulum autotrophicum (strain ATCC 43914 / DSM 3382 / VKM B-1955 / HRM2) (Desulfobacterium autotrophicum).